The primary structure comprises 716 residues: Fatty acid oxidation complex subunit alpha (716 aa).

The segment at 1 to 189 is enoyl-CoA hydratase/isomerase; sequence MIYQSPTIQV…KVGAVDAVVA (189 aa). Asp296 lines the substrate pocket. Residues 311-716 form a 3-hydroxyacyl-CoA dehydrogenase region; sequence KAVNSAAVLG…AANNGSYYQA (406 aa). NAD(+) contacts are provided by residues Met324, Asp343, 400–402, Lys407, and Ser429; that span reads VVE. Residue His450 is the For 3-hydroxyacyl-CoA dehydrogenase activity of the active site. Residue Asn453 participates in NAD(+) binding. 2 residues coordinate substrate: Asn500 and Tyr660.

The protein in the N-terminal section; belongs to the enoyl-CoA hydratase/isomerase family. This sequence in the C-terminal section; belongs to the 3-hydroxyacyl-CoA dehydrogenase family. In terms of assembly, heterotetramer of two alpha chains (FadB) and two beta chains (FadA).

The enzyme catalyses a (3S)-3-hydroxyacyl-CoA + NAD(+) = a 3-oxoacyl-CoA + NADH + H(+). It carries out the reaction a (3S)-3-hydroxyacyl-CoA = a (2E)-enoyl-CoA + H2O. It catalyses the reaction a 4-saturated-(3S)-3-hydroxyacyl-CoA = a (3E)-enoyl-CoA + H2O. The catalysed reaction is (3S)-3-hydroxybutanoyl-CoA = (3R)-3-hydroxybutanoyl-CoA. The enzyme catalyses a (3Z)-enoyl-CoA = a 4-saturated (2E)-enoyl-CoA. It carries out the reaction a (3E)-enoyl-CoA = a 4-saturated (2E)-enoyl-CoA. It functions in the pathway lipid metabolism; fatty acid beta-oxidation. In terms of biological role, involved in the aerobic and anaerobic degradation of long-chain fatty acids via beta-oxidation cycle. Catalyzes the formation of 3-oxoacyl-CoA from enoyl-CoA via L-3-hydroxyacyl-CoA. It can also use D-3-hydroxyacyl-CoA and cis-3-enoyl-CoA as substrate. This Shewanella oneidensis (strain ATCC 700550 / JCM 31522 / CIP 106686 / LMG 19005 / NCIMB 14063 / MR-1) protein is Fatty acid oxidation complex subunit alpha.